The chain runs to 89 residues: Small ribosomal subunit protein uS15 (89 aa).

The protein belongs to the universal ribosomal protein uS15 family. Part of the 30S ribosomal subunit. Forms a bridge to the 50S subunit in the 70S ribosome, contacting the 23S rRNA.

In terms of biological role, one of the primary rRNA binding proteins, it binds directly to 16S rRNA where it helps nucleate assembly of the platform of the 30S subunit by binding and bridging several RNA helices of the 16S rRNA. Forms an intersubunit bridge (bridge B4) with the 23S rRNA of the 50S subunit in the ribosome. This Nitrosomonas eutropha (strain DSM 101675 / C91 / Nm57) protein is Small ribosomal subunit protein uS15.